We begin with the raw amino-acid sequence, 195 residues long: ATP-dependent Clp protease proteolytic subunit 1 (195 aa).

Serine 96 acts as the Nucleophile in catalysis. Residue histidine 121 is part of the active site.

This sequence belongs to the peptidase S14 family. As to quaternary structure, fourteen ClpP subunits assemble into 2 heptameric rings which stack back to back to give a disk-like structure with a central cavity, resembling the structure of eukaryotic proteasomes.

The protein localises to the cytoplasm. It catalyses the reaction Hydrolysis of proteins to small peptides in the presence of ATP and magnesium. alpha-casein is the usual test substrate. In the absence of ATP, only oligopeptides shorter than five residues are hydrolyzed (such as succinyl-Leu-Tyr-|-NHMec, and Leu-Tyr-Leu-|-Tyr-Trp, in which cleavage of the -Tyr-|-Leu- and -Tyr-|-Trp bonds also occurs).. Cleaves peptides in various proteins in a process that requires ATP hydrolysis. Has a chymotrypsin-like activity. Plays a major role in the degradation of misfolded proteins. The chain is ATP-dependent Clp protease proteolytic subunit 1 from Prochlorococcus marinus (strain MIT 9312).